We begin with the raw amino-acid sequence, 380 residues long: MLIVADENIPLLDAFFQGFGEIRRYPGRSLDAASVKDADILLVRSVTKVDRQLLEGSRVRFVGTCTIGTDHLDLDYFAEAGIRWSSAPGCNARGVVDYVLGSLLTLAELDGVALPERVYGVVGAGEVGGRLVRVLHGLGWKVLVCDPLRQAAEGGDYVSLETILQQCDVISLHTPLQRGGQHPTWHLLGQAQLAQLRPGAWLVNASRGPVVDNVALRELLLDREDVHAVLDVWEGEPQVDLTLADLCTLATPHIAGYSLDGRQRGTAQIYQALCRFLGVNEQVRLAELLPKPPLAQIELDASTDLSWALATLCRAVYDPRRDDADFRRSLSDDPQQQRAAFDQLRKQYPQRREIEGLAVRLHGEAPQLAQLVSALGGVLV.

Positions 45 and 66 each coordinate substrate. Residues Asp146, Thr174, 205 to 207 (ASR), and Asp231 each bind NAD(+). Residue Arg207 is part of the active site. Glu236 is an active-site residue. The Proton donor role is filled by His253. Gly256 provides a ligand contact to NAD(+). Tyr257 serves as a coordination point for substrate.

This sequence belongs to the D-isomer specific 2-hydroxyacid dehydrogenase family. PdxB subfamily. In terms of assembly, homodimer.

The protein localises to the cytoplasm. It catalyses the reaction 4-phospho-D-erythronate + NAD(+) = (R)-3-hydroxy-2-oxo-4-phosphooxybutanoate + NADH + H(+). It functions in the pathway cofactor biosynthesis; pyridoxine 5'-phosphate biosynthesis; pyridoxine 5'-phosphate from D-erythrose 4-phosphate: step 2/5. In terms of biological role, catalyzes the oxidation of erythronate-4-phosphate to 3-hydroxy-2-oxo-4-phosphonooxybutanoate. The chain is Erythronate-4-phosphate dehydrogenase from Pseudomonas putida (strain ATCC 700007 / DSM 6899 / JCM 31910 / BCRC 17059 / LMG 24140 / F1).